A 625-amino-acid chain; its full sequence is Coagulation factor XI (625 aa).

Residues 1–18 (MIFLYQVVHFILFTSVSG) form the signal peptide. Apple domains follow at residues 20–103 (CVTQ…FKQC), 110–193 (CNKD…LKSC), 200–283 (CIRD…LQSC), and 291–374 (CHSS…LRLC). 17 disulfide bridges follow: Cys20/Cys103, Cys46/Cys76, Cys50/Cys56, Cys110/Cys193, Cys136/Cys165, Cys140/Cys146, Cys200/Cys283, Cys226/Cys255, Cys230/Cys236, Cys291/Cys374, Cys317/Cys346, Cys321/Cys327, Cys380/Cys500, Cys416/Cys432, Cys514/Cys581, Cys545/Cys560, and Cys571/Cys599. Residues Asn90 and Asn126 are each glycosylated (N-linked (GlcNAc...) (complex) asparagine). N-linked (GlcNAc...) (complex) asparagine; atypical glycosylation occurs at Asn163. In terms of domain architecture, Peptidase S1 spans 388 to 623 (IVGGTASVRG…YVDWILEKTQ (236 aa)). The active-site Charge relay system is the His431. N-linked (GlcNAc...) (complex) asparagine glycosylation occurs at Asn450. The active-site Charge relay system is Asp480. Asn491 carries an N-linked (GlcNAc...) (complex) asparagine glycan. 547 to 550 (KRYR) contributes to the heparin binding site. Ser575 (charge relay system) is an active-site residue.

This sequence belongs to the peptidase S1 family. Plasma kallikrein subfamily. Homodimer; disulfide-linked. Can form non-covalently bonded homodimers. After activation the heavy and light chains are also linked by a disulfide bond. Interacts (activated) with F9 (inactive and activated) in calcium-dependent manner. Forms a heterodimer with SERPINA5. Interacts with Anopheles gambiae D7L2. Interacts (activated) with guianensin, an anticoagulant protein from Simulium guianense saliva. N-glycosylated on both chains. N-glycosylated sites mainly consist of nonfucosylated sialylated biantennary (in high abundance) and/or triantennary (in low abundance) complex structures. Glycosylation at Asn-163 uses a rare non-canonical Asn-X-Cys glycosite. Post-translationally, activated by factor XIIa (or XII), which cleaves each polypeptide after Arg-387 into the light chain, which contains the active site, and the heavy chain, which associates with high molecular weight (HMW) kininogen. Activated by F12 (activated); the presence of negatively charged surfaces accelerates activation. Activated by F2 (thrombin); the presence of negatively charged surfaces, such as polyphosphate and dextran sulfate, strongly accelerates activation. Autoactivated; the presence of negatively charged surfaces, such as polyphosphate and dextran sulfate, accelerates autoactivation and autolysis. As to expression, isoform 2 is produced by platelets and megakaryocytes but absent from other blood cells.

The protein resides in the secreted. The catalysed reaction is Selective cleavage of Arg-|-Ala and Arg-|-Val bonds in factor IX to form factor IXa.. With respect to regulation, inhibited by SERPINA5. Its function is as follows. Factor XI triggers the middle phase of the intrinsic pathway of blood coagulation by activating factor IX. This is Coagulation factor XI (F11) from Homo sapiens (Human).